A 437-amino-acid polypeptide reads, in one-letter code: Epsilon-sarcoglycan (437 aa).

The Extracellular segment spans residues 1 to 317; the sequence is MQLPRWWELG…LKSRDYYTDF (317 aa). N-linked (GlcNAc...) asparagine glycosylation is present at N200. The helical transmembrane segment at 318–338 threads the bilayer; the sequence is LITLAVPSAVALVLFLILAYI. At 339 to 437 the chain is on the cytoplasmic side; that stretch reads MCCRREGVEK…QQQTTGKWYP (99 aa).

The protein belongs to the sarcoglycan alpha/epsilon family. In terms of processing, N-glycosylated. Post-translationally, ubiquitinated, leading to its degradation by the proteasome. In terms of tissue distribution, ubiquitous.

It is found in the cell membrane. Its subcellular location is the sarcolemma. The protein resides in the cytoplasm. It localises to the cytoskeleton. The protein localises to the cell projection. It is found in the dendrite. Its subcellular location is the golgi apparatus. Component of the sarcoglycan complex, a subcomplex of the dystrophin-glycoprotein complex which forms a link between the F-actin cytoskeleton and the extracellular matrix. This Homo sapiens (Human) protein is Epsilon-sarcoglycan (SGCE).